The chain runs to 420 residues: DNA repair protein NreA (420 aa).

A PIP motif motif is present at residues Gln413 to Ala420.

This sequence belongs to the Nre family. In terms of assembly, interacts with the DNA polymerase sliding clamp (PCNA) via the PIP (PCNA-interacting peptide) motif.

Involved in DNA damage repair. Works together with the UvrABC proteins in repairing DNA damage resulting from exposure to the DNA damaging agent mitomycin C (MMC). The protein is DNA repair protein NreA of Haloferax volcanii (strain ATCC 29605 / DSM 3757 / JCM 8879 / NBRC 14742 / NCIMB 2012 / VKM B-1768 / DS2) (Halobacterium volcanii).